A 438-amino-acid chain; its full sequence is Cell division cycle-associated 7-like protein (438 aa).

Positions 9–33 match the Integrase domain-binding motif 1 (IBM1) motif; that stretch reads IPKEVADIFNAPSDDEEFVGFQDDV. Ser-21 is modified (phosphoserine). The PSIP1-binding stretch occupies residues 55-114; the sequence is ACLHSKYFTEELRRIFKEDTDSDNEDFEGFTESELNIGSNPELIESELSDGDKTHPMMSD. Positions 62–88 match the Integrase domain-binding motif 2 (IBM2) motif; that stretch reads FTEELRRIFKEDTDSDNEDFEGFTESE. Residues 72–199 are disordered; the sequence is EDTDSDNEDF…ESRAESQETS (128 aa). Thr-74 carries the phosphothreonine modification. A compositionally biased stretch (acidic residues) spans 74-85; it reads TDSDNEDFEGFT. Phosphoserine is present on Ser-76. Thr-85 carries the phosphothreonine modification. Residues Ser-100, Ser-103, Ser-113, Ser-135, Ser-136, Ser-183, and Ser-185 each carry the phosphoserine modification. Positions 113 to 123 are enriched in acidic residues; that stretch reads SDEEDDDDEEE. Residues 166 to 183 show a composition bias toward basic and acidic residues; that stretch reads TDLRREKSCRQPKEKEDS. An MYC-binding region spans residues 201–223; that stretch reads ALLKRAMNIKENKAMLAQLLAEL. Residues Lys-210 and Lys-213 each participate in a glycyl lysine isopeptide (Lys-Gly) (interchain with G-Cter in SUMO2) cross-link. Ser-249 is modified (phosphoserine).

As to quaternary structure, interacts with MYC. Interacts (via IBM motifs) with PSIP1 (via IBD domain); phosphorylation increases its affinity for PSIP1. Post-translationally, phosphorylation increases its interaction with PSIP1.

Its subcellular location is the cytoplasm. The protein resides in the nucleus. Plays a role in transcriptional regulation as a repressor that inhibits monoamine oxidase A (MAOA) activity and gene expression by binding to the promoter. Plays an important oncogenic role in mediating the full transforming effect of MYC in medulloblastoma cells. Involved in apoptotic signaling pathways; May act downstream of P38-kinase and BCL-2, but upstream of CASP3/caspase-3 as well as CCND1/cyclin D1 and E2F1. This Rattus norvegicus (Rat) protein is Cell division cycle-associated 7-like protein (Cdca7l).